The following is a 661-amino-acid chain: Translation factor GUF1 homolog, mitochondrial (661 aa).

Residues 59-242 (ENIRNFCIVA…AIIDRIPSPK (184 aa)) enclose the tr-type G domain. Residues 68-75 (AHVDHGKS), 135-139 (DTPGH), and 189-192 (NKVD) contribute to the GTP site.

Belongs to the TRAFAC class translation factor GTPase superfamily. Classic translation factor GTPase family. LepA subfamily.

It localises to the mitochondrion inner membrane. The catalysed reaction is GTP + H2O = GDP + phosphate + H(+). Functionally, promotes mitochondrial protein synthesis. May act as a fidelity factor of the translation reaction, by catalyzing a one-codon backward translocation of tRNAs on improperly translocated ribosomes. Binds to mitochondrial ribosomes in a GTP-dependent manner. The polypeptide is Translation factor GUF1 homolog, mitochondrial (Ixodes scapularis (Black-legged tick)).